Consider the following 337-residue polypeptide: Glyceraldehyde-3-phosphate dehydrogenase (337 aa).

NAD(+) is bound by residues 12–13 (RI), D34, and K79. Residues 150-152 (SCT), T181, 210-211 (TG), and R233 each bind D-glyceraldehyde 3-phosphate. C151 serves as the catalytic Nucleophile. Residue N315 participates in NAD(+) binding.

The protein belongs to the glyceraldehyde-3-phosphate dehydrogenase family. In terms of assembly, homotetramer.

The protein localises to the cytoplasm. The enzyme catalyses D-glyceraldehyde 3-phosphate + phosphate + NAD(+) = (2R)-3-phospho-glyceroyl phosphate + NADH + H(+). It participates in carbohydrate degradation; glycolysis; pyruvate from D-glyceraldehyde 3-phosphate: step 1/5. In Schizophyllum commune (Split gill fungus), this protein is Glyceraldehyde-3-phosphate dehydrogenase (GPD).